The primary structure comprises 360 residues: 3-isopropylmalate dehydrogenase (360 aa).

Position 76–89 (76–89 (GPKWDTIERDIRPE)) interacts with NAD(+). Substrate contacts are provided by R96, R106, R134, and D224. Positions 224, 248, and 252 each coordinate Mg(2+). 282–294 (GSAPDIAGKGIAN) lines the NAD(+) pocket.

Belongs to the isocitrate and isopropylmalate dehydrogenases family. LeuB type 1 subfamily. As to quaternary structure, homodimer. Requires Mg(2+) as cofactor. Mn(2+) is required as a cofactor.

It is found in the cytoplasm. It catalyses the reaction (2R,3S)-3-isopropylmalate + NAD(+) = 4-methyl-2-oxopentanoate + CO2 + NADH. The protein operates within amino-acid biosynthesis; L-leucine biosynthesis; L-leucine from 3-methyl-2-oxobutanoate: step 3/4. In terms of biological role, catalyzes the oxidation of 3-carboxy-2-hydroxy-4-methylpentanoate (3-isopropylmalate) to 3-carboxy-4-methyl-2-oxopentanoate. The product decarboxylates to 4-methyl-2 oxopentanoate. This chain is 3-isopropylmalate dehydrogenase, found in Pseudomonas fluorescens (strain Pf0-1).